The chain runs to 125 residues: Large ribosomal subunit protein bL12 (125 aa).

Belongs to the bacterial ribosomal protein bL12 family. In terms of assembly, homodimer. Part of the ribosomal stalk of the 50S ribosomal subunit. Forms a multimeric L10(L12)X complex, where L10 forms an elongated spine to which 2 to 4 L12 dimers bind in a sequential fashion. Binds GTP-bound translation factors.

In terms of biological role, forms part of the ribosomal stalk which helps the ribosome interact with GTP-bound translation factors. Is thus essential for accurate translation. This Francisella tularensis subsp. novicida (strain U112) protein is Large ribosomal subunit protein bL12.